The chain runs to 351 residues: 3-dehydroquinate synthase (351 aa).

Residues 60–65 (DGEEYK), 94–98 (GVISD), 118–119 (TT), Lys-131, Lys-140, and 158–161 (FLKT) contribute to the NAD(+) site. Zn(2+) is bound by residues Glu-173, His-239, and His-256.

It belongs to the sugar phosphate cyclases superfamily. Dehydroquinate synthase family. Requires NAD(+) as cofactor. The cofactor is Co(2+). Zn(2+) serves as cofactor.

The protein resides in the cytoplasm. The enzyme catalyses 7-phospho-2-dehydro-3-deoxy-D-arabino-heptonate = 3-dehydroquinate + phosphate. Its pathway is metabolic intermediate biosynthesis; chorismate biosynthesis; chorismate from D-erythrose 4-phosphate and phosphoenolpyruvate: step 2/7. Functionally, catalyzes the conversion of 3-deoxy-D-arabino-heptulosonate 7-phosphate (DAHP) to dehydroquinate (DHQ). The sequence is that of 3-dehydroquinate synthase from Campylobacter jejuni subsp. jejuni serotype O:2 (strain ATCC 700819 / NCTC 11168).